A 1239-amino-acid polypeptide reads, in one-letter code: Protein strawberry notch homolog 1 (1239 aa).

The segment at 684–837 is disordered; the sequence is AQSNNNSPRD…SANSNTNSSF (154 aa). The span at 694–713 shows a compositional bias: basic and acidic residues; it reads SPCKENKIKKRKGEEVSREA. Over residues 728-744 the composition is skewed to acidic residues; the sequence is DESESESDASDNEESDN. Positions 778–790 are enriched in basic residues; it reads KEHKKVKEKKKKK. Residues 814-837 are compositionally biased toward low complexity; that stretch reads FTSTVGTTTSSTNASANSNTNSSF. A coiled-coil region spans residues 838-866; the sequence is VTSQDAVERAQQMKKELLDKLEKLAEDLP.

It belongs to the SBNO family.

The protein localises to the nucleus. Functionally, plays a crucial role in the regulation of neural stem cells (NSCs) proliferation. Enhances the phosphorylation of GSK3B through the PI3K-Akt signaling pathway, thereby upregulating the Wnt/beta-catenin signaling pathway and promoting the proliferation of NSCs. The sequence is that of Protein strawberry notch homolog 1 (SBNO1) from Gallus gallus (Chicken).